The sequence spans 377 residues: Peptide chain release factor 2 (377 aa).

Gln-257 carries the post-translational modification N5-methylglutamine.

The protein belongs to the prokaryotic/mitochondrial release factor family. Post-translationally, methylated by PrmC. Methylation increases the termination efficiency of RF2.

It localises to the cytoplasm. Functionally, peptide chain release factor 2 directs the termination of translation in response to the peptide chain termination codons UGA and UAA. The polypeptide is Peptide chain release factor 2 (Lactiplantibacillus plantarum (strain ATCC BAA-793 / NCIMB 8826 / WCFS1) (Lactobacillus plantarum)).